Reading from the N-terminus, the 196-residue chain is Holliday junction branch migration complex subunit RuvA (196 aa).

The interval 1–64 (MIDRLRGQLV…EDAMLLFGFA (64 aa)) is domain I. A domain II region spans residues 65-143 (TREEREAFDA…AAAGGGGGVA (79 aa)). Residues 144-153 (AGEGDGPFME) form a flexible linker region. Positions 153–196 (EAREALTGLGYSLEEAERALRDVPPQETVEQYIKAALRKIGGRR) are domain III.

This sequence belongs to the RuvA family. As to quaternary structure, homotetramer. Forms an RuvA(8)-RuvB(12)-Holliday junction (HJ) complex. HJ DNA is sandwiched between 2 RuvA tetramers; dsDNA enters through RuvA and exits via RuvB. An RuvB hexamer assembles on each DNA strand where it exits the tetramer. Each RuvB hexamer is contacted by two RuvA subunits (via domain III) on 2 adjacent RuvB subunits; this complex drives branch migration. In the full resolvosome a probable DNA-RuvA(4)-RuvB(12)-RuvC(2) complex forms which resolves the HJ.

The protein resides in the cytoplasm. Its function is as follows. The RuvA-RuvB-RuvC complex processes Holliday junction (HJ) DNA during genetic recombination and DNA repair, while the RuvA-RuvB complex plays an important role in the rescue of blocked DNA replication forks via replication fork reversal (RFR). RuvA specifically binds to HJ cruciform DNA, conferring on it an open structure. The RuvB hexamer acts as an ATP-dependent pump, pulling dsDNA into and through the RuvAB complex. HJ branch migration allows RuvC to scan DNA until it finds its consensus sequence, where it cleaves and resolves the cruciform DNA. The chain is Holliday junction branch migration complex subunit RuvA from Rubrobacter xylanophilus (strain DSM 9941 / JCM 11954 / NBRC 16129 / PRD-1).